We begin with the raw amino-acid sequence, 388 residues long: ATP phosphoribosyltransferase regulatory subunit (388 aa).

Belongs to the class-II aminoacyl-tRNA synthetase family. HisZ subfamily. In terms of assembly, heteromultimer composed of HisG and HisZ subunits.

The protein localises to the cytoplasm. It functions in the pathway amino-acid biosynthesis; L-histidine biosynthesis; L-histidine from 5-phospho-alpha-D-ribose 1-diphosphate: step 1/9. Its function is as follows. Required for the first step of histidine biosynthesis. May allow the feedback regulation of ATP phosphoribosyltransferase activity by histidine. The polypeptide is ATP phosphoribosyltransferase regulatory subunit (Acinetobacter baylyi (strain ATCC 33305 / BD413 / ADP1)).